The following is a 467-amino-acid chain: MTTGKIVQIIGAVVDVEFPQGEVPRVYDALNVVDAQERLVLEVQQQIGGGVVRCIVMGSSDGLRRGLTVENTGAPISVPVGTKTLGRIMNVLGDAIDECGDIDAEEHYAIHREAPSYEEQSNSTELLETGVKVIDLVCPFAKGGKIGLFGGAGVGKTVNMMELINNIALQHSGLSVFAGVGERTREGNDFYFEMQEAGVVNIEKPEESKVAMVYGQMNEPPGNRLRVALTGLTMAERFRDEGRDVLLFVDNIYRYTLAGTEVSALLGRMPSAVGYQPTLAEEMGVLQERITSTKQGSITSVQAVYVPADDLTDPSPATTFAHLDATVVLNRNIAAMGLYPAIDPLDSTSRQLDPLVVGQEHYDVARGVQSTLQRYKELKDIIAILGMDELSEEDKQVVSRARKIEKFLTQPYHVAEVFTGDPGIYVPLKDTLAGFKGLLAGDYDDVPEQAFMYCGKIEDALEKAKKL.

Residue 150 to 157 (GGAGVGKT) participates in ATP binding.

Belongs to the ATPase alpha/beta chains family. As to quaternary structure, F-type ATPases have 2 components, CF(1) - the catalytic core - and CF(0) - the membrane proton channel. CF(1) has five subunits: alpha(3), beta(3), gamma(1), delta(1), epsilon(1). CF(0) has three main subunits: a(1), b(2) and c(9-12). The alpha and beta chains form an alternating ring which encloses part of the gamma chain. CF(1) is attached to CF(0) by a central stalk formed by the gamma and epsilon chains, while a peripheral stalk is formed by the delta and b chains.

It is found in the cell inner membrane. The enzyme catalyses ATP + H2O + 4 H(+)(in) = ADP + phosphate + 5 H(+)(out). Its function is as follows. Produces ATP from ADP in the presence of a proton gradient across the membrane. The catalytic sites are hosted primarily by the beta subunits. This Aliivibrio fischeri (strain MJ11) (Vibrio fischeri) protein is ATP synthase subunit beta.